Here is a 108-residue protein sequence, read N- to C-terminus: Transmembrane protein 265 (108 aa).

The next 2 helical transmembrane spans lie at 34–54 (AATS…VFAI) and 78–98 (LILA…LLLW).

It belongs to the CD225/Dispanin family.

It localises to the membrane. The protein is Transmembrane protein 265 of Homo sapiens (Human).